Reading from the N-terminus, the 325-residue chain is D site-binding protein (325 aa).

Disordered regions lie at residues 1–98 (MARP…AGPS), 124–203 (LEHG…EVLM), and 230–256 (FSEEELKPQPIMKKARKVQVPEEQKDE). Residues 17–28 (GPAGAPPGGGAL) show a composition bias toward gly residues. A compositionally biased stretch (low complexity) spans 71–80 (AGPADAPSGA). Position 86 is a phosphoserine (Ser86). Over residues 88 to 98 (RGRSGPVAGPS) the composition is skewed to low complexity. Pro residues predominate over residues 129–153 (PPSPPPPGGLSPAPSPARTPAPSPG). Residues 154–171 (PGSCSSSSPRSSPGHAPA) are compositionally biased toward low complexity. Residues 255–318 (DEKYWSRRYK…SHYRAVLSRY (64 aa)) enclose the bZIP domain. The basic motif stretch occupies residues 257–279 (KYWSRRYKNNEAAKRSRDARRLK). The leucine-zipper stretch occupies residues 283-297 (ISVRAAFLEKENALL).

This sequence belongs to the bZIP family. PAR subfamily. Binds DNA as a homodimer or a heterodimer. Can form a heterodimer with TEF. As to expression, expressed in the suprachiasmatic nuclei (SCN) and in most peripheral tissues, with a strong circadian rhythmicity.

The protein localises to the nucleus. Its function is as follows. This transcriptional activator recognizes and binds to the sequence 5'-RTTAYGTAAY-3' found in the promoter of genes such as albumin, CYP2A4 and CYP2A5. It is not essential for circadian rhythm generation, but modulates important clock output genes. May be a direct target for regulation by the circadian pacemaker component clock. May affect circadian period and sleep regulation. This chain is D site-binding protein (Dbp), found in Mus musculus (Mouse).